Consider the following 381-residue polypeptide: S-adenosylmethionine synthase (381 aa).

Histidine 15 serves as a coordination point for ATP. Position 17 (aspartate 17) interacts with Mg(2+). Position 43 (glutamate 43) interacts with K(+). The L-methionine site is built by glutamate 56 and glutamine 99. The interval 99–109 (QSLDIAQGVDN) is flexible loop. Residues 164 to 166 (DGK), 230 to 231 (RF), aspartate 239, 245 to 246 (RK), and lysine 266 each bind ATP. Aspartate 239 contacts L-methionine. Lysine 270 lines the L-methionine pocket.

It belongs to the AdoMet synthase family. In terms of assembly, homotetramer; dimer of dimers. Mg(2+) serves as cofactor. Requires K(+) as cofactor.

It is found in the cytoplasm. The enzyme catalyses L-methionine + ATP + H2O = S-adenosyl-L-methionine + phosphate + diphosphate. The protein operates within amino-acid biosynthesis; S-adenosyl-L-methionine biosynthesis; S-adenosyl-L-methionine from L-methionine: step 1/1. Functionally, catalyzes the formation of S-adenosylmethionine (AdoMet) from methionine and ATP. The overall synthetic reaction is composed of two sequential steps, AdoMet formation and the subsequent tripolyphosphate hydrolysis which occurs prior to release of AdoMet from the enzyme. The sequence is that of S-adenosylmethionine synthase from Legionella jeonii.